The chain runs to 102 residues: MFAVVETGGKQYKVKEQDVIRIEKLNASVGEEVTLSNVIALTDVNNNIVFTQSATVTASVLEQCRNDKIIIFKKKRRKNYRRKNGHRQYMTVLRVIKINNME.

This sequence belongs to the bacterial ribosomal protein bL21 family. In terms of assembly, part of the 50S ribosomal subunit. Contacts protein L20.

This protein binds to 23S rRNA in the presence of protein L20. The sequence is that of Large ribosomal subunit protein bL21 from Ehrlichia canis (strain Jake).